The chain runs to 757 residues: RNA-directed RNA polymerase catalytic subunit (757 aa).

The tract at residues 50-82 (SEKGKWTTNTETGAPQLNPIDGPLPEDNEPSGY) is disordered. Polar residues predominate over residues 55 to 64 (WTTNTETGAP). 2 short sequence motifs (nuclear localization signal) span residues 187 to 195 (RKRRVRDNM) and 203 to 216 (RTIG…NKRI). A promoter-binding site region spans residues 249-256 (RGFVYFVE). Residues 286-483 (VRKMMTNSQD…GINMSKKKSY (198 aa)) form the RdRp catalytic domain.

It belongs to the influenza viruses polymerase PB1 family. Influenza RNA polymerase is composed of three subunits: PB1, PB2 and PA. Interacts (via N-terminus) with PA (via C-terminus). Interacts (via C-terminus) with PB2 (via N-terminus); this interaction is essential for transcription initiation. Post-translationally, phosphorylated by host PRKCA.

Its subcellular location is the host nucleus. It localises to the host cytoplasm. It carries out the reaction RNA(n) + a ribonucleoside 5'-triphosphate = RNA(n+1) + diphosphate. RNA-dependent RNA polymerase which is responsible for replication and transcription of virus RNA segments. The transcription of viral mRNAs occurs by a unique mechanism called cap-snatching. 5' methylated caps of cellular mRNAs are cleaved after 10-13 nucleotides by PA. In turn, these short capped RNAs are used as primers by PB1 for transcription of viral mRNAs. During virus replication, PB1 initiates RNA synthesis and copy vRNA into complementary RNA (cRNA) which in turn serves as a template for the production of more vRNAs. The polypeptide is RNA-directed RNA polymerase catalytic subunit (Influenza A virus (strain A/Leningrad/134/17/1957 H2N2)).